A 153-amino-acid polypeptide reads, in one-letter code: Ubiquitin-conjugating enzyme E2-18 kDa (153 aa).

A UBC core domain is found at 2–149 (AATRRLTREL…AEEFTKKNAE (148 aa)). C86 acts as the Glycyl thioester intermediate in catalysis.

This sequence belongs to the ubiquitin-conjugating enzyme family.

The enzyme catalyses S-ubiquitinyl-[E1 ubiquitin-activating enzyme]-L-cysteine + [E2 ubiquitin-conjugating enzyme]-L-cysteine = [E1 ubiquitin-activating enzyme]-L-cysteine + S-ubiquitinyl-[E2 ubiquitin-conjugating enzyme]-L-cysteine.. It participates in protein modification; protein ubiquitination. In terms of biological role, catalyzes the covalent attachment of ubiquitin to other proteins. This chain is Ubiquitin-conjugating enzyme E2-18 kDa (Ubc84D), found in Drosophila melanogaster (Fruit fly).